Consider the following 161-residue polypeptide: Anthranilate 1,2-dioxygenase small subunit (161 aa).

Belongs to the bacterial ring-hydroxylating dioxygenase beta subunit family. Part of a multicomponent enzyme system composed of a reductase (AndAa), a ferredoxin (AndAb) and a two-subunit oxygenase component (AndAc and AndAd).

It catalyses the reaction anthranilate + NADH + O2 + 3 H(+) = catechol + NH4(+) + CO2 + NAD(+). The catalysed reaction is anthranilate + NADPH + O2 + 3 H(+) = catechol + NH4(+) + CO2 + NADP(+). It participates in aromatic compound metabolism; anthranilate degradation via hydroxylation; catechol from anthranilate: step 1/1. Functionally, oxygenase component of anthranilate dioxygenase multicomponent enzyme system which catalyzes the incorporation of both atoms of molecular oxygen into anthranilate to form catechol. Can also act on benzoate and salicylate but not on 2-chlorobenzoate or o-toluate. In Burkholderia cepacia (Pseudomonas cepacia), this protein is Anthranilate 1,2-dioxygenase small subunit.